Reading from the N-terminus, the 800-residue chain is Endonuclease MutS2 (800 aa).

336–343 (GPNTGGKT) contributes to the ATP binding site. Residues 725-800 (LDLRGVRYEA…GDGATIVELK (76 aa)) enclose the Smr domain.

The protein belongs to the DNA mismatch repair MutS family. MutS2 subfamily. As to quaternary structure, homodimer. Binds to stalled ribosomes, contacting rRNA.

In terms of biological role, endonuclease that is involved in the suppression of homologous recombination and thus may have a key role in the control of bacterial genetic diversity. Acts as a ribosome collision sensor, splitting the ribosome into its 2 subunits. Detects stalled/collided 70S ribosomes which it binds and splits by an ATP-hydrolysis driven conformational change. Acts upstream of the ribosome quality control system (RQC), a ribosome-associated complex that mediates the extraction of incompletely synthesized nascent chains from stalled ribosomes and their subsequent degradation. Probably generates substrates for RQC. This Leuconostoc mesenteroides subsp. mesenteroides (strain ATCC 8293 / DSM 20343 / BCRC 11652 / CCM 1803 / JCM 6124 / NCDO 523 / NBRC 100496 / NCIMB 8023 / NCTC 12954 / NRRL B-1118 / 37Y) protein is Endonuclease MutS2.